The following is a 184-amino-acid chain: Ras protein let-60 (184 aa).

Residue glycine 10–serine 17 coordinates GTP. The short motif at tyrosine 32–tyrosine 40 is the Effector region element. GTP contacts are provided by residues aspartate 57–glutamine 61 and asparagine 116–aspartate 119. Cysteine 181 is modified (cysteine methyl ester). Cysteine 181 is lipidated: S-farnesyl cysteine. Positions glutamine 182–methionine 184 are cleaved as a propeptide — removed in mature form.

This sequence belongs to the small GTPase superfamily. Ras family. As to quaternary structure, interacts with soc-2. Interacts (in GTP-bound form) with plc-1 (via Ras-associating domain 1). In terms of tissue distribution, expressed in body wall muscles and in the nervous system including ganglion, nerve ring dorsal and ventral nerve cords, motor neurons and sensory tail neurons.

Its subcellular location is the cell membrane. The enzyme catalyses GTP + H2O = GDP + phosphate + H(+). In terms of biological role, GTP-binding protein with GTPase activity. The level of let-60 controls the switch between vulval and hypodermal cell fates during C.elegans vulval induction. May stimulate the guanine nucleotide exchange factor (GEF) activity of rap-1. May induce nuclear condensation. In Caenorhabditis elegans, this protein is Ras protein let-60.